The primary structure comprises 301 residues: Acetylglutamate kinase (301 aa).

Residues 72–73 (GG), R94, and N199 each bind substrate.

Belongs to the acetylglutamate kinase family. ArgB subfamily.

Its subcellular location is the cytoplasm. It catalyses the reaction N-acetyl-L-glutamate + ATP = N-acetyl-L-glutamyl 5-phosphate + ADP. It participates in amino-acid biosynthesis; L-arginine biosynthesis; N(2)-acetyl-L-ornithine from L-glutamate: step 2/4. Functionally, catalyzes the ATP-dependent phosphorylation of N-acetyl-L-glutamate. In Bartonella quintana (strain Toulouse) (Rochalimaea quintana), this protein is Acetylglutamate kinase.